We begin with the raw amino-acid sequence, 225 residues long: Ribosome maturation factor RimP (225 aa).

This sequence belongs to the RimP family.

Its subcellular location is the cytoplasm. Its function is as follows. Required for maturation of 30S ribosomal subunits. This is Ribosome maturation factor RimP from Rhodospirillum rubrum (strain ATCC 11170 / ATH 1.1.1 / DSM 467 / LMG 4362 / NCIMB 8255 / S1).